Reading from the N-terminus, the 613-residue chain is Threonine--tRNA ligase (613 aa).

The segment at Met-1 to Gln-147 is editing domain. Catalytic regions lie at residues Pro-199–Pro-495 and Arg-200–Pro-495. 3 residues coordinate Zn(2+): Cys-292, His-343, and His-464.

It belongs to the class-II aminoacyl-tRNA synthetase family. Homodimer. Zn(2+) is required as a cofactor.

It is found in the cytoplasm. The catalysed reaction is tRNA(Thr) + L-threonine + ATP = L-threonyl-tRNA(Thr) + AMP + diphosphate + H(+). Functionally, catalyzes the attachment of threonine to tRNA(Thr) in a two-step reaction: L-threonine is first activated by ATP to form Thr-AMP and then transferred to the acceptor end of tRNA(Thr). Also edits incorrectly charged L-seryl-tRNA(Thr). This is Threonine--tRNA ligase from Caldivirga maquilingensis (strain ATCC 700844 / DSM 13496 / JCM 10307 / IC-167).